Consider the following 66-residue polypeptide: Transmembrane protein B66L (66 aa).

A signal peptide spans 1-20 (MDIKRALILFLLFLVVLSNA). The Extracellular segment spans residues 21–40 (FVDYIISNFNHAVTCRKPTY). Residues 41 to 61 (FGIVLQGIFLVILFSIVDYLI) form a helical membrane-spanning segment. Topologically, residues 62–66 (NENIL) are cytoplasmic.

Belongs to the asfivirus B66L family.

Its subcellular location is the host membrane. The protein is Transmembrane protein B66L of Ornithodoros (relapsing fever ticks).